The chain runs to 817 residues: Protein EFR3 homolog B (817 aa).

Residues serine 212, serine 214, and serine 216 each carry the phosphoserine modification.

It belongs to the EFR3 family. In terms of assembly, component of a phosphatidylinositol 4-kinase (PI4K) complex, composed of PI4KA, EFR3 (EFR3A or EFR3B), TTC7 (TTC7A or TTC7B) and HYCC (HYCC1 or HYCC2). Post-translationally, palmitoylated at its N-terminus, anchoring the protein to the plasma membrane. In terms of tissue distribution, widely expressed.

Its subcellular location is the cell membrane. It localises to the cytoplasm. The protein resides in the cytosol. In terms of biological role, component of a complex required to localize phosphatidylinositol 4-kinase (PI4K) to the plasma membrane. The complex acts as a regulator of phosphatidylinositol 4-phosphate (PtdIns(4)P) synthesis. In the complex, EFR3B probably acts as the membrane-anchoring component. Also involved in responsiveness to G-protein-coupled receptors; it is however unclear whether this role is direct or indirect. This chain is Protein EFR3 homolog B (Efr3b), found in Mus musculus (Mouse).